A 720-amino-acid chain; its full sequence is Dedicator of cytokinesis protein 9 (720 aa).

A DOCKER domain is found at 186-638 (KSYASTPELR…LSDIIVPRIC (453 aa)). Residues 277–638 (DEEASMMEDV…LSDIIVPRIC (362 aa)) form an interaction with CDC42 region.

It belongs to the DOCK family. In terms of assembly, homodimer. Interacts preferentially with nucleotide-depleted CDC42.

It is found in the endomembrane system. Its function is as follows. Guanine nucleotide-exchange factor (GEF) that activates CDC42 by exchanging bound GDP for free GTP. Overexpression induces filopodia formation. This chain is Dedicator of cytokinesis protein 9 (Dock9), found in Rattus norvegicus (Rat).